The primary structure comprises 109 residues: Large ribosomal subunit protein P2 (109 aa).

The interval 63–109 (ASVPSGGAGGASGGAAAAGGAAEEAKEEEKEEEKEESDEDMGFGLFD) is disordered. Positions 68-79 (GGAGGASGGAAA) are enriched in gly residues. Positions 91–103 (EKEEEKEESDEDM) are enriched in acidic residues. S99 is subject to Phosphoserine.

This sequence belongs to the eukaryotic ribosomal protein P1/P2 family. In terms of assembly, P1 and P2 exist as dimers at the large ribosomal subunit.

Functionally, plays an important role in the elongation step of protein synthesis. The protein is Large ribosomal subunit protein P2 of Fusarium culmorum.